The following is a 432-amino-acid chain: Glutamate--cysteine ligase EgtA (432 aa).

The protein belongs to the glutamate--cysteine ligase type 2 family. EgtA subfamily.

The catalysed reaction is L-cysteine + L-glutamate + ATP = gamma-L-glutamyl-L-cysteine + ADP + phosphate + H(+). The protein operates within amino-acid biosynthesis; ergothioneine biosynthesis. Its function is as follows. Catalyzes the synthesis of gamma-glutamylcysteine (gamma-GC) which is used as substrate for the biosynthesis of the low-molecular thiol compound ergothioneine (ERG). ERG is one of the major redox buffers which protects bacteria against redox stressors and antibiotics; loss of ERG or mycothiol (MSH, the other major redox buffer in this bacteria) leads to respiratory alterations and bioenergetic deficiencies that negatively impact virulence. In Mycobacterium tuberculosis (strain CDC 1551 / Oshkosh), this protein is Glutamate--cysteine ligase EgtA (egtA).